We begin with the raw amino-acid sequence, 279 residues long: Dehydrogenase/reductase SDR family member 4 (279 aa).

Leu-37–Val-61 is an NADP(+) binding site. Lys-93 carries the post-translational modification N6-acetyllysine; alternate. N6-succinyllysine; alternate is present on Lys-93. Ser-170 contributes to the substrate binding site. The active-site Proton acceptor is the Tyr-183. Residue Lys-187 participates in NADP(+) binding. The residue at position 217 (Lys-217) is an N6-acetyllysine; alternate. The residue at position 217 (Lys-217) is an N6-succinyllysine; alternate. Phosphoserine is present on Ser-221. N6-succinyllysine occurs at positions 228 and 235. A Peroxisomal targeting signal motif is present at residues Ser-277 to Leu-279.

The protein belongs to the short-chain dehydrogenases/reductases (SDR) family. Homotetramer. In terms of tissue distribution, detected in heart, kidney, liver and small intestine. Detected at lower levels in brain, lung, stomach and spleen.

The protein localises to the peroxisome. It catalyses the reaction a secondary alcohol + NADP(+) = a ketone + NADPH + H(+). The enzyme catalyses 3alpha-hydroxy-5beta-pregnan-20-one + NADP(+) = 5beta-pregnan-3,20-dione + NADPH + H(+). It carries out the reaction 5beta-dihydrotestosterone + NADPH + H(+) = 5beta-androstane-3alpha,17beta-diol + NADP(+). The catalysed reaction is all-trans-retinol + NADP(+) = all-trans-retinal + NADPH + H(+). It catalyses the reaction isatin + NADPH + H(+) = 3-hydroxyindolin-2-one + NADP(+). Its activity is regulated as follows. Inhibited by kaempferol, quercetin, genistein and myristic acid. In terms of biological role, NADPH-dependent oxidoreductase which catalyzes the reduction of a variety of compounds bearing carbonyl groups including ketosteroids, alpha-dicarbonyl compounds, aldehydes, aromatic ketones and quinones. Reduces all-trans-retinal and 9-cis retinal. Reduces 3-ketosteroids and benzil into 3alpha-hydroxysteroids and S-benzoin, respectively, in contrast to the stereoselectivity of primates DHRS4s which produce 3beta-hydroxysteroids and R-benzoin. In the reverse reaction, catalyzes the NADP-dependent oxidation of 3alpha-hydroxysteroids and alcohol, but with much lower efficiency. Involved in the metabolism of 3alpha-hydroxysteroids, retinoid, isatin and xenobiotic carbonyl compounds. This chain is Dehydrogenase/reductase SDR family member 4 (DHRS4), found in Sus scrofa (Pig).